A 297-amino-acid polypeptide reads, in one-letter code: Acetaldehyde dehydrogenase (297 aa).

15 to 18 (SGSI) contributes to the NAD(+) binding site. Residue cysteine 130 is the Acyl-thioester intermediate of the active site. Residues 162–170 (SAGIATREN) and asparagine 272 contribute to the NAD(+) site.

Belongs to the acetaldehyde dehydrogenase family.

The catalysed reaction is acetaldehyde + NAD(+) + CoA = acetyl-CoA + NADH + H(+). The polypeptide is Acetaldehyde dehydrogenase (Burkholderia pseudomallei (strain 1106a)).